The primary structure comprises 366 residues: Succinyl-diaminopimelate desuccinylase (366 aa).

Position 66 (histidine 66) interacts with Zn(2+). Aspartate 68 is a catalytic residue. Aspartate 97 contacts Zn(2+). The Proton acceptor role is filled by glutamate 127. Residues glutamate 128, glutamate 156, and histidine 341 each contribute to the Zn(2+) site.

Belongs to the peptidase M20A family. DapE subfamily. In terms of assembly, homodimer. Requires Zn(2+) as cofactor. It depends on Co(2+) as a cofactor.

It catalyses the reaction N-succinyl-(2S,6S)-2,6-diaminopimelate + H2O = (2S,6S)-2,6-diaminopimelate + succinate. It participates in amino-acid biosynthesis; L-lysine biosynthesis via DAP pathway; LL-2,6-diaminopimelate from (S)-tetrahydrodipicolinate (succinylase route): step 3/3. In terms of biological role, catalyzes the hydrolysis of N-succinyl-L,L-diaminopimelic acid (SDAP), forming succinate and LL-2,6-diaminopimelate (DAP), an intermediate involved in the bacterial biosynthesis of lysine and meso-diaminopimelic acid, an essential component of bacterial cell walls. The chain is Succinyl-diaminopimelate desuccinylase from Aliarcobacter butzleri (strain RM4018) (Arcobacter butzleri).